The primary structure comprises 158 residues: Egg cell-secreted protein 1.1 (158 aa).

Residues methionine 1–alanine 27 form the signal peptide. N-linked (GlcNAc...) asparagine glycosylation occurs at asparagine 122.

This sequence belongs to the plant egg cell-secreted peptide family. As to expression, restricted to female reproductive tissues, specifically accumulating in storage vesicles of the unfertilized egg cell.

Its subcellular location is the cytoplasmic vesicle. The protein resides in the secreted. Functionally, involved in the regulation of gamete interactions during the double fertilization and to prevent multiple-pollen tube attraction; mediates the redistribution of the gamete fusogen HAP2/GCS1 to the cell surface after secretion upon sperm arrival. In Arabidopsis thaliana (Mouse-ear cress), this protein is Egg cell-secreted protein 1.1 (EC1.1).